Consider the following 351-residue polypeptide: Uroporphyrinogen decarboxylase (351 aa).

Substrate is bound by residues arginine 25 to arginine 29, aspartate 74, tyrosine 151, serine 206, and histidine 325.

The protein belongs to the uroporphyrinogen decarboxylase family. As to quaternary structure, homodimer.

It is found in the cytoplasm. It carries out the reaction uroporphyrinogen III + 4 H(+) = coproporphyrinogen III + 4 CO2. It functions in the pathway porphyrin-containing compound metabolism; protoporphyrin-IX biosynthesis; coproporphyrinogen-III from 5-aminolevulinate: step 4/4. Its function is as follows. Catalyzes the decarboxylation of four acetate groups of uroporphyrinogen-III to yield coproporphyrinogen-III. The sequence is that of Uroporphyrinogen decarboxylase from Prosthecochloris aestuarii (strain DSM 271 / SK 413).